The sequence spans 372 residues: MPHQQILMLFGLLPVATNISTWWNFGSMLLTCSALQIMTGFFLSMHYTANINLAFSSIVHVVRDVPHGWMMQNLHAIGASMFFICVYIHVARGLYYGSYLNKETWLSGTTLLIMLMATAFFGYVLPWGQMSFWAATVITNLLTAIPYLGTTMTTWLWGGFAINDPTLTRFFALHFILPFGIISLSSLHIMLLHAEGSSNPLGTNSDIDKIPFHPYHTYKDLFMISSMIMIMLLTISFIPDIFNDPENFSKANPLVTPQHIKPEWYFLFAYGILRSIPNKLGGALALAMSITILLTVPFTHTANTRSMTFRPFMQLMFWTLVTTFMIITWTATKPVEPPYTMISQVTSSLYFMFFMSNPIVGWLENKIMKTQL.

The next 4 helical transmembrane spans lie at 25 to 45 (FGSM…FLSM), 69 to 90 (WMMQ…YIHV), 105 to 125 (WLSG…GYVL), and 170 to 190 (FFAL…LHIM). Positions 75 and 89 each coordinate heme b. Residues His174 and His188 each contribute to the heme b site. His193 contributes to the a ubiquinone binding site. The next 4 membrane-spanning stretches (helical) occupy residues 218 to 238 (YKDL…ISFI), 280 to 300 (LGGA…PFTH), 312 to 332 (FMQL…WTAT), and 339 to 358 (YTMI…MSNP).

Belongs to the cytochrome b family. The cytochrome bc1 complex contains 3 respiratory subunits (MT-CYB, CYC1 and UQCRFS1), 2 core proteins (UQCRC1 and UQCRC2) and probably 6 low-molecular weight proteins. Requires heme b as cofactor.

Its subcellular location is the mitochondrion inner membrane. Functionally, component of the ubiquinol-cytochrome c reductase complex (complex III or cytochrome b-c1 complex) that is part of the mitochondrial respiratory chain. The b-c1 complex mediates electron transfer from ubiquinol to cytochrome c. Contributes to the generation of a proton gradient across the mitochondrial membrane that is then used for ATP synthesis. In Acrantophis dumerili (Dumeril's ground boa), this protein is Cytochrome b (MT-CYB).